The primary structure comprises 338 residues: UDP-glucose 4-epimerase (338 aa).

Residues Y11–I12, D31–S36, D58–I59, F80–K84, N99, S124, Y149, K153, and F178 each bind NAD(+). S124 and Y149 together coordinate substrate. Y149 functions as the Proton acceptor in the catalytic mechanism. Residues N179, N199–L200, S216–F218, R231, and R292–D295 each bind substrate.

Belongs to the NAD(P)-dependent epimerase/dehydratase family. In terms of assembly, homodimer. Requires NAD(+) as cofactor.

The catalysed reaction is UDP-alpha-D-glucose = UDP-alpha-D-galactose. It participates in carbohydrate metabolism; galactose metabolism. In terms of biological role, involved in the metabolism of galactose. Catalyzes the conversion of UDP-galactose (UDP-Gal) to UDP-glucose (UDP-Glc) through a mechanism involving the transient reduction of NAD. By controlling the internal galactose concentration, it may be linked to the biosynthesis of lipopolysaccharide surface molecules, which are important for the pathogenesis of H.influenzae. In Haemophilus influenzae (strain ATCC 51907 / DSM 11121 / KW20 / Rd), this protein is UDP-glucose 4-epimerase (galE).